The following is a 255-amino-acid chain: Taurine import ATP-binding protein TauB (255 aa).

In terms of domain architecture, ABC transporter spans 2-229; it reads LQISHLYADY…RFVAGESSRS (228 aa). ATP is bound at residue 34–41; sequence GPSGCGKT.

The protein belongs to the ABC transporter superfamily. Taurine importer (TC 3.A.1.17.1) family. In terms of assembly, the complex is composed of two ATP-binding proteins (TauB), two transmembrane proteins (TauC) and a solute-binding protein (TauA).

The protein localises to the cell inner membrane. The catalysed reaction is taurine(out) + ATP + H2O = taurine(in) + ADP + phosphate + H(+). Part of the ABC transporter complex TauABC involved in taurine import. Responsible for energy coupling to the transport system. This chain is Taurine import ATP-binding protein TauB, found in Escherichia coli O6:K15:H31 (strain 536 / UPEC).